We begin with the raw amino-acid sequence, 376 residues long: Dual-specificity RNA methyltransferase RlmN (376 aa).

The Proton acceptor role is filled by E95. The Radical SAM core domain maps to 101–339 (EKERATLCVS…CIVRRPRGDD (239 aa)). C108 and C344 are oxidised to a cystine. C115, C119, and C122 together coordinate [4Fe-4S] cluster. S-adenosyl-L-methionine-binding positions include 169 to 170 (GE), S201, 223 to 225 (SLH), and N301. The active-site S-methylcysteine intermediate is the C344.

The protein belongs to the radical SAM superfamily. RlmN family. It depends on [4Fe-4S] cluster as a cofactor.

The protein localises to the cytoplasm. It catalyses the reaction adenosine(2503) in 23S rRNA + 2 reduced [2Fe-2S]-[ferredoxin] + 2 S-adenosyl-L-methionine = 2-methyladenosine(2503) in 23S rRNA + 5'-deoxyadenosine + L-methionine + 2 oxidized [2Fe-2S]-[ferredoxin] + S-adenosyl-L-homocysteine. The catalysed reaction is adenosine(37) in tRNA + 2 reduced [2Fe-2S]-[ferredoxin] + 2 S-adenosyl-L-methionine = 2-methyladenosine(37) in tRNA + 5'-deoxyadenosine + L-methionine + 2 oxidized [2Fe-2S]-[ferredoxin] + S-adenosyl-L-homocysteine. In terms of biological role, specifically methylates position 2 of adenine 2503 in 23S rRNA and position 2 of adenine 37 in tRNAs. m2A2503 modification seems to play a crucial role in the proofreading step occurring at the peptidyl transferase center and thus would serve to optimize ribosomal fidelity. The sequence is that of Dual-specificity RNA methyltransferase RlmN from Pseudoalteromonas translucida (strain TAC 125).